An 80-amino-acid polypeptide reads, in one-letter code: Nuclear protein 1 (80 aa).

Residues 40-80 are disordered; it reads GGRKGRTKREAAANTNRPSPGGHERKLLTKFQNSERKKAWR. A compositionally biased stretch (basic and acidic residues) spans 61–80; sequence GHERKLLTKFQNSERKKAWR. The Nuclear localization signal motif lies at 64-80; it reads RKLLTKFQNSERKKAWR.

Belongs to the NUPR family. Monomer. Directly interacts with MSL1 and binds MORF4L1, two components of histone acetyltransferase complex; the interaction with MORF4L1 may be mediated by MSL1. Interacts with EP300; this interaction enhances the effect of EP300 on PAX2 transcription factor activity. Interacts with PAXIP1; this interaction prevents PAXIP1 inhibition of PAX2 transcription factor activity. Interacts with COPS5; this interaction allows COPS5-dependent CDKN1B nuclear to cytoplasm translocation. Interacts with RNF2. Interacts with FOXO3; this interaction represses FOXO3 transactivation. Interacts with PTMA; regulates apoptotic process. Interacts with MYOD1, EP300 and DDX5; this interaction coordinates the association of anti-proliferative and pro-myogenic proteins at the myogenin promoter. Interacts with TP53; interaction is stress-dependent. Forms a complex with EP300 and TP53; this complex binds CDKN1A promoter leading to transcriptional induction of CDKN1A. Phosphorylated. Phosphorylation promotes DNA-binding activity. In terms of processing, acetylated. In terms of tissue distribution, strongly activated in pancreatic acinar cells during the acute phase of pancreatitis, in developing pancreas and during pancreatic regeneration.

Its subcellular location is the nucleus. It is found in the cytoplasm. It localises to the perinuclear region. In terms of biological role, transcription regulator that converts stress signals into a program of gene expression that empowers cells with resistance to the stress induced by a change in their microenvironment. Thereby participates in the regulation of many processes namely cell-cycle, apoptosis, autophagy and DNA repair responses. Controls cell cycle progression and protects cells from genotoxic stress induced by doxorubicin through the complex formation with TP53 and EP300 that binds CDKN1A promoter leading to transcriptional induction of CDKN1A. Protects pancreatic cancer cells from stress-induced cell death by binding the RELB promoter and activating its transcription, leading to IER3 transactivation. Negatively regulates apoptosis through interaction with PTMA. Inhibits autophagy-induced apoptosis in cardiac cells through FOXO3 interaction, inducing cytoplasmic translocation of FOXO3 thereby preventing the FOXO3 association with the pro-autophagic BNIP3 promoter. Inhibits cell growth and facilitates programmed cell death by apoptosis after adriamycin-induced DNA damage through transactivation of TP53. Regulates methamphetamine-induced apoptosis and autophagy through DDIT3-mediated endoplasmic reticulum stress pathway. Participates in DNA repair following gamma-irradiation by facilitating DNA access of the transcription machinery through interaction with MSL1 leading to inhibition of histone H4' Lys-16' acetylation (H4K16ac). Coactivator of PAX2 transcription factor activity, both by recruiting the EP300 cofactor to increase PAX2 transcription factor activity and by binding PAXIP1 to suppress PAXIP1-induced inhibition on PAX2. Positively regulates cell cycle progression through interaction with COPS5 inducing cytoplasmic translocation of CDKN1B leading to the CDKN1B degradation. Coordinates, through its interaction with EP300, the assiociation of MYOD1, EP300 and DDX5 to the MYOG promoter, leading to inhibition of cell-cycle progression and myogenic differentiation promotion. Negatively regulates beta cell proliferation via inhibition of cell-cycle regulatory genes expression through the suppression of their promoter activities. Also required for LHB expression and ovarian maturation. Exacerbates CNS inflammation and demyelination upon cuprizone treatment. The chain is Nuclear protein 1 from Rattus norvegicus (Rat).